Consider the following 142-residue polypeptide: Transcriptional regulator MraZ (142 aa).

SpoVT-AbrB domains are found at residues 5 to 51 and 77 to 120; these read ASAL…PRPE and AADV…DAAT.

It belongs to the MraZ family. As to quaternary structure, forms oligomers.

It localises to the cytoplasm. It is found in the nucleoid. The protein is Transcriptional regulator MraZ of Ralstonia nicotianae (strain ATCC BAA-1114 / GMI1000) (Ralstonia solanacearum).